The primary structure comprises 192 residues: uncharacterized protein (192 aa).

It to R.meliloti RA0936 and y4nF.

This is an uncharacterized protein from Sinorhizobium fredii (strain NBRC 101917 / NGR234).